The sequence spans 106 residues: L-rhamnose mutarotase (106 aa).

Substrate is bound at residue Tyr-20. His-24 serves as the catalytic Proton donor. Substrate contacts are provided by residues Tyr-43 and 78 to 79 (WW).

Belongs to the rhamnose mutarotase family. Homodimer.

Its subcellular location is the cytoplasm. The catalysed reaction is alpha-L-rhamnose = beta-L-rhamnose. Its pathway is carbohydrate metabolism; L-rhamnose metabolism. Functionally, involved in the anomeric conversion of L-rhamnose. The polypeptide is L-rhamnose mutarotase (Leptothrix cholodnii (strain ATCC 51168 / LMG 8142 / SP-6) (Leptothrix discophora (strain SP-6))).